Here is a 217-residue protein sequence, read N- to C-terminus: Thiamine-phosphate synthase (217 aa).

Residues Gln-38 to Lys-42 and Asn-70 contribute to the 4-amino-2-methyl-5-(diphosphooxymethyl)pyrimidine site. Asp-71 and Asp-90 together coordinate Mg(2+). Residue Ser-109 coordinates 4-amino-2-methyl-5-(diphosphooxymethyl)pyrimidine. Ser-136–Thr-138 is a 2-[(2R,5Z)-2-carboxy-4-methylthiazol-5(2H)-ylidene]ethyl phosphate binding site. Residue Lys-139 coordinates 4-amino-2-methyl-5-(diphosphooxymethyl)pyrimidine. Gly-166 provides a ligand contact to 2-[(2R,5Z)-2-carboxy-4-methylthiazol-5(2H)-ylidene]ethyl phosphate.

It belongs to the thiamine-phosphate synthase family. The cofactor is Mg(2+).

It catalyses the reaction 2-[(2R,5Z)-2-carboxy-4-methylthiazol-5(2H)-ylidene]ethyl phosphate + 4-amino-2-methyl-5-(diphosphooxymethyl)pyrimidine + 2 H(+) = thiamine phosphate + CO2 + diphosphate. The enzyme catalyses 2-(2-carboxy-4-methylthiazol-5-yl)ethyl phosphate + 4-amino-2-methyl-5-(diphosphooxymethyl)pyrimidine + 2 H(+) = thiamine phosphate + CO2 + diphosphate. It carries out the reaction 4-methyl-5-(2-phosphooxyethyl)-thiazole + 4-amino-2-methyl-5-(diphosphooxymethyl)pyrimidine + H(+) = thiamine phosphate + diphosphate. It participates in cofactor biosynthesis; thiamine diphosphate biosynthesis; thiamine phosphate from 4-amino-2-methyl-5-diphosphomethylpyrimidine and 4-methyl-5-(2-phosphoethyl)-thiazole: step 1/1. In terms of biological role, condenses 4-methyl-5-(beta-hydroxyethyl)thiazole monophosphate (THZ-P) and 2-methyl-4-amino-5-hydroxymethyl pyrimidine pyrophosphate (HMP-PP) to form thiamine monophosphate (TMP). This chain is Thiamine-phosphate synthase, found in Nitrosococcus oceani (strain ATCC 19707 / BCRC 17464 / JCM 30415 / NCIMB 11848 / C-107).